The primary structure comprises 128 residues: MSNFFEKYINGFIETLDQIDAADFQRIQHDFDPNQFPYDWVVERVSDVKDYLLNPRDFSDVETFKSTMRAKIKHFYACYSSKIPFFLFTSFVLAIFNSVGQYVKYHCDLDFTNPDAVTIFFREKALND.

This is an uncharacterized protein from Mycoplasma pneumoniae (strain ATCC 29342 / M129 / Subtype 1) (Mycoplasmoides pneumoniae).